A 278-amino-acid chain; its full sequence is Urease accessory protein UreD (278 aa).

This sequence belongs to the UreD family. In terms of assembly, ureD, UreF and UreG form a complex that acts as a GTP-hydrolysis-dependent molecular chaperone, activating the urease apoprotein by helping to assemble the nickel containing metallocenter of UreC. The UreE protein probably delivers the nickel.

The protein localises to the cytoplasm. Its function is as follows. Required for maturation of urease via the functional incorporation of the urease nickel metallocenter. In Leptothrix cholodnii (strain ATCC 51168 / LMG 8142 / SP-6) (Leptothrix discophora (strain SP-6)), this protein is Urease accessory protein UreD.